Reading from the N-terminus, the 141-residue chain is MSIRRFAREAALQFLYQDDFIPESADTPGELKERFEQFCEIYQVNKKGRTYALNLIAGVLADQEAIDRLIEEAAVNWRMSRISATDRNLLRVATFEINFCDDVPAEVAINEAVEIAKRFCGDESPKFVNGVLDAVKTLCQK.

Belongs to the NusB family.

Functionally, involved in transcription antitermination. Required for transcription of ribosomal RNA (rRNA) genes. Binds specifically to the boxA antiterminator sequence of the ribosomal RNA (rrn) operons. This is Transcription antitermination protein NusB from Desulfotalea psychrophila (strain LSv54 / DSM 12343).